Reading from the N-terminus, the 218-residue chain is Glycerol-3-phosphate acyltransferase (218 aa).

6 consecutive transmembrane segments (helical) span residues 3–23, 53–73, 82–102, 112–132, 142–162, and 166–186; these read FAIFAFLSFISGSIPFGYWIA, GFPVLVLDVAKGIFPVYLSGI, FQLACGVLAVLGHMFSPFLGF, LGVFLVLTPIACFGAIFVFLV, IGSIFASLTLPLVYAFSSILL, and EVSYWILGTMVFISIGIILTH.

Belongs to the PlsY family. Probably interacts with PlsX.

The protein resides in the cell inner membrane. It carries out the reaction an acyl phosphate + sn-glycerol 3-phosphate = a 1-acyl-sn-glycero-3-phosphate + phosphate. Its pathway is lipid metabolism; phospholipid metabolism. Its function is as follows. Catalyzes the transfer of an acyl group from acyl-phosphate (acyl-PO(4)) to glycerol-3-phosphate (G3P) to form lysophosphatidic acid (LPA). This enzyme utilizes acyl-phosphate as fatty acyl donor, but not acyl-CoA or acyl-ACP. The polypeptide is Glycerol-3-phosphate acyltransferase (Leptospira borgpetersenii serovar Hardjo-bovis (strain JB197)).